Reading from the N-terminus, the 821-residue chain is DNA gyrase subunit A (821 aa).

The Topo IIA-type catalytic domain occupies 35–500; it reads LPDVRDGLKP…GLETIEDEDL (466 aa). Catalysis depends on Tyr123, which acts as the O-(5'-phospho-DNA)-tyrosine intermediate. Positions 527–533 match the GyrA-box motif; the sequence is QKRGGKG.

Belongs to the type II topoisomerase GyrA/ParC subunit family. In terms of assembly, heterotetramer, composed of two GyrA and two GyrB chains. In the heterotetramer, GyrA contains the active site tyrosine that forms a transient covalent intermediate with DNA, while GyrB binds cofactors and catalyzes ATP hydrolysis.

It localises to the cytoplasm. It carries out the reaction ATP-dependent breakage, passage and rejoining of double-stranded DNA.. In terms of biological role, a type II topoisomerase that negatively supercoils closed circular double-stranded (ds) DNA in an ATP-dependent manner to modulate DNA topology and maintain chromosomes in an underwound state. Negative supercoiling favors strand separation, and DNA replication, transcription, recombination and repair, all of which involve strand separation. Also able to catalyze the interconversion of other topological isomers of dsDNA rings, including catenanes and knotted rings. Type II topoisomerases break and join 2 DNA strands simultaneously in an ATP-dependent manner. The polypeptide is DNA gyrase subunit A (Bacillus subtilis (strain 168)).